Consider the following 397-residue polypeptide: Riboflavin biosynthesis protein RibBA (397 aa).

The DHBP synthase stretch occupies residues Met-1–His-199. D-ribulose 5-phosphate-binding positions include Arg-26–Glu-27, Asp-31, Arg-138–Thr-142, and Glu-162. A Mg(2+)-binding site is contributed by Glu-27. His-141 is a binding site for Mg(2+). The segment at His-200–Leu-397 is GTP cyclohydrolase II. Residue Arg-250–Glu-254 participates in GTP binding. Zn(2+) is bound by residues Cys-255, Cys-266, and Cys-268. GTP contacts are provided by residues Gln-271, Glu-293 to Arg-295, and Thr-315. Catalysis depends on Asp-327, which acts as the Proton acceptor; for GTP cyclohydrolase activity. The active-site Nucleophile; for GTP cyclohydrolase activity is the Arg-329. The GTP site is built by Thr-350 and Lys-355.

It in the N-terminal section; belongs to the DHBP synthase family. This sequence in the C-terminal section; belongs to the GTP cyclohydrolase II family. The cofactor is Mg(2+). Mn(2+) serves as cofactor. It depends on Zn(2+) as a cofactor.

It catalyses the reaction D-ribulose 5-phosphate = (2S)-2-hydroxy-3-oxobutyl phosphate + formate + H(+). The enzyme catalyses GTP + 4 H2O = 2,5-diamino-6-hydroxy-4-(5-phosphoribosylamino)-pyrimidine + formate + 2 phosphate + 3 H(+). The protein operates within cofactor biosynthesis; riboflavin biosynthesis; 2-hydroxy-3-oxobutyl phosphate from D-ribulose 5-phosphate: step 1/1. It participates in cofactor biosynthesis; riboflavin biosynthesis; 5-amino-6-(D-ribitylamino)uracil from GTP: step 1/4. In terms of biological role, catalyzes the conversion of D-ribulose 5-phosphate to formate and 3,4-dihydroxy-2-butanone 4-phosphate. Catalyzes the conversion of GTP to 2,5-diamino-6-ribosylamino-4(3H)-pyrimidinone 5'-phosphate (DARP), formate and pyrophosphate. In Bacillus cereus (strain ATCC 14579 / DSM 31 / CCUG 7414 / JCM 2152 / NBRC 15305 / NCIMB 9373 / NCTC 2599 / NRRL B-3711), this protein is Riboflavin biosynthesis protein RibBA.